We begin with the raw amino-acid sequence, 306 residues long: Homoserine kinase (306 aa).

Residue 90 to 100 (PLARGLGSSAS) coordinates ATP.

This sequence belongs to the GHMP kinase family. Homoserine kinase subfamily.

Its subcellular location is the cytoplasm. The catalysed reaction is L-homoserine + ATP = O-phospho-L-homoserine + ADP + H(+). It participates in amino-acid biosynthesis; L-threonine biosynthesis; L-threonine from L-aspartate: step 4/5. In terms of biological role, catalyzes the ATP-dependent phosphorylation of L-homoserine to L-homoserine phosphate. The protein is Homoserine kinase of Staphylococcus epidermidis (strain ATCC 12228 / FDA PCI 1200).